The primary structure comprises 172 residues: C-phycocyanin beta chain (172 aa).

Residues Asn35, Asp39, Asn72, Arg77, Cys82, 82-88 (CLRDMEI), 149-151 (TIG), and Cys153 each bind (2R,3E)-phycocyanobilin. An N4-methylasparagine modification is found at Asn72.

This sequence belongs to the phycobiliprotein family. Heterodimer of an alpha and a beta subunit, which further assembles into trimers and the trimers into hexamers. The basic functional unit of phycobiliproteins is a ring-shaped hexamer formed from two back-to-back trimers contacting via the alpha chain subunits. The trimers are composed of alpha/beta subunit heterodimers arranged around a three-fold axis of symmetry. The phycoerythrins also contain a gamma subunit which is located in the center of the hexamer. Post-translationally, contains two covalently linked phycocyanobilin chromophores.

The protein resides in the plastid. It localises to the chloroplast thylakoid membrane. Light-harvesting photosynthetic tetrapyrrole chromophore-protein from the phycobiliprotein complex (phycobilisome, PBS). Phycocyanin is the major phycobiliprotein in the PBS rod. The sequence is that of C-phycocyanin beta chain (cpcB) from Cyanidium caldarium (Red alga).